The sequence spans 540 residues: Phosphoenolpyruvate carboxykinase (ATP) (540 aa).

Residue R65 participates in substrate binding. N6-acetyllysine is present on K87. Substrate is bound by residues Y207 and K213. ATP is bound by residues K213, H232, and 248–256 (GLSGTGKTT). Mn(2+) is bound by residues K213 and H232. D269 is a binding site for Mn(2+). Residues E297, R333, 449-450 (RI), and T455 each bind ATP. Substrate is bound at residue R333. K523 is modified (N6-acetyllysine).

Belongs to the phosphoenolpyruvate carboxykinase (ATP) family. As to quaternary structure, monomer. Requires Mn(2+) as cofactor.

It localises to the cytoplasm. It carries out the reaction oxaloacetate + ATP = phosphoenolpyruvate + ADP + CO2. Its pathway is carbohydrate biosynthesis; gluconeogenesis. Functionally, involved in the gluconeogenesis. Catalyzes the conversion of oxaloacetate (OAA) to phosphoenolpyruvate (PEP) through direct phosphoryl transfer between the nucleoside triphosphate and OAA. In Shigella flexneri serotype 5b (strain 8401), this protein is Phosphoenolpyruvate carboxykinase (ATP).